We begin with the raw amino-acid sequence, 337 residues long: uncharacterized protein (337 aa).

Residues 248-276 (NELKAETTIQVLREQLRQEKKLKEQVLSL) adopt a coiled-coil conformation. The segment at 285–337 (GGRGEEFGKPDETPSSASVGDDNFPSSTNHTFEARRRPSSLSSGGALKPSKIL) is disordered. Positions 287–296 (RGEEFGKPDE) are enriched in basic and acidic residues. The span at 297–315 (TPSSASVGDDNFPSSTNHT) shows a compositional bias: polar residues.

This is an uncharacterized protein from Invertebrate iridescent virus 3 (IIV-3).